Reading from the N-terminus, the 274-residue chain is HMP-PP phosphatase (274 aa).

The Nucleophile role is filled by Asp-8. Residues Asp-8, Asp-10, and Asp-213 each contribute to the Mg(2+) site.

Belongs to the HAD-like hydrolase superfamily. Cof family. Requires Mg(2+) as cofactor.

The catalysed reaction is 4-amino-2-methyl-5-(diphosphooxymethyl)pyrimidine + H2O = 4-amino-2-methyl-5-(phosphooxymethyl)pyrimidine + phosphate + H(+). Functionally, catalyzes the hydrolysis of 4-amino-2-methyl-5-hydroxymethylpyrimidine pyrophosphate (HMP-PP) to 4-amino-2-methyl-5-hydroxymethylpyrimidine phosphate (HMP-P). The sequence is that of HMP-PP phosphatase from Serratia proteamaculans (strain 568).